The primary structure comprises 319 residues: MTDARMRSREQERTDETESESTDGCPECGGLVVNDEEHGESVCADCGLVVEEDGIDRGPEWRAFDSKEKDEKSRVGAPTTNTMHDKGLSTNIDWRDKDAYGNSLSSNQRQKMQRLRKWNERFRTRDAKERNLKQALGEIDRMASALGLPDNVRETASVIYRRALEDDLLPGRSIEGVATSCVYAAARQAGVPRSLDEIADVSRVEKAEIARTYRYVVRELGLEVAPADPESYVPRFASDLGLSDEASHRARELLKTAKDKGVHSGKSPVGLAAAAVYAAALLTNEKTTQAKVSEVADISEVTIRNRYHELLEAEDTIPV.

A compositionally biased stretch (basic and acidic residues) spans 1–16 (MTDARMRSREQERTDE). The tract at residues 1–33 (MTDARMRSREQERTDETESESTDGCPECGGLVV) is disordered. Residues 21–51 (STDGCPECGGLVVNDEEHGESVCADCGLVVE) form a TFIIB-type zinc finger. Zn(2+)-binding residues include Cys25, Cys28, Cys43, and Cys46. The span at 59–74 (PEWRAFDSKEKDEKSR) shows a compositional bias: basic and acidic residues. The tract at residues 59 to 89 (PEWRAFDSKEKDEKSRVGAPTTNTMHDKGLS) is disordered. Repeat copies occupy residues 137–220 (GEID…VREL) and 231–312 (SYVP…ELLE).

Belongs to the TFIIB family.

Stabilizes TBP binding to an archaeal box-A promoter. Also responsible for recruiting RNA polymerase II to the pre-initiation complex (DNA-TBP-TFIIB). This is Transcription initiation factor IIB 6 from Halobacterium salinarum (strain ATCC 700922 / JCM 11081 / NRC-1) (Halobacterium halobium).